A 620-amino-acid polypeptide reads, in one-letter code: Phosphopentomutase (620 aa).

Residues arginine 71 and serine 173 each contribute to the alpha-D-glucose 1,6-bisphosphate site. Residue serine 173 is the Phosphoserine intermediate of the active site. Positions 173, 330, 332, and 334 each coordinate Mg(2+). Serine 173 carries the phosphoserine modification. The alpha-D-glucose 1,6-bisphosphate site is built by aspartate 334, arginine 335, threonine 408, glutamate 432, and lysine 446.

This sequence belongs to the phosphohexose mutase family. Monomer. Requires Mg(2+) as cofactor. As to expression, highly expressed in lung, spleen and thymus. Expressed at lower levels in liver, brain, kidney, skeletal muscle, testis and heart.

Its subcellular location is the cytoplasm. The protein localises to the cytosol. The catalysed reaction is alpha-D-ribose 1-phosphate = D-ribose 5-phosphate. The enzyme catalyses 2-deoxy-alpha-D-ribose 1-phosphate = 2-deoxy-D-ribose 5-phosphate. It catalyses the reaction alpha-D-glucose 1-phosphate = alpha-D-glucose 6-phosphate. It carries out the reaction O-phospho-L-seryl-[protein] + alpha-D-glucose 1-phosphate = alpha-D-glucose 1,6-bisphosphate + L-seryl-[protein]. The catalysed reaction is alpha-D-glucose 1,6-bisphosphate + L-seryl-[protein] = O-phospho-L-seryl-[protein] + alpha-D-glucose 6-phosphate. Functionally, catalyzes the conversion of the nucleoside breakdown products ribose-1-phosphate and deoxyribose-1-phosphate to the corresponding 5-phosphopentoses. Catalyzes the reversible isomerization of alpha-D-glucose 1-phosphate to alpha-D-glucose 6-phosphate but with a lower catalytic efficiency. The mechanism proceeds via the intermediate compound alpha-D-glucose 1,6-bisphosphate. In vitro, also has a low glucose 1,6-bisphosphate synthase activity which is most probably not physiologically relevant. The chain is Phosphopentomutase from Mus musculus (Mouse).